We begin with the raw amino-acid sequence, 483 residues long: Pre-glycoprotein polyprotein GP complex (483 aa).

Residue glycine 2 is the site of N-myristoyl glycine; by host attachment. The Extracellular segment spans residues 2–17 (GQLVSFIGEIPAIVHE). A helical membrane pass occupies residues 18-32 (ALNVALIAVSIIAIM). A topological domain (cytoplasmic) is located at residue lysine 33. Residues 34–53 (GLINIWKSGLFQLIMFLILA) form a helical membrane-spanning segment. Extracellular-side segments run 54 to 58 (GRSCS) and 59 to 422 (ISIG…SLVD). A Zn(2+)-binding site is contributed by cysteine 57. Asparagine 73, asparagine 88, asparagine 130, and asparagine 179 each carry an N-linked (GlcNAc...) asparagine; by host glycan. Disulfide bonds link cysteine 85-cysteine 223, cysteine 186-cysteine 204, cysteine 269-cysteine 282, cysteine 291-cysteine 300, and cysteine 354-cysteine 375. N-linked (GlcNAc...) asparagine; by host glycosylation occurs at asparagine 216. N-linked (GlcNAc...) asparagine; by host glycosylation is found at asparagine 355, asparagine 363, asparagine 380, and asparagine 385. Residues 423–443 (LCFWSTLFYTASIFLHLLHIP) form a helical membrane-spanning segment. Topologically, residues 444 to 483 (THRHIIGEGCPKPHRLTSDSLCACGFFQLKGRPTRWARIP) are cytoplasmic. Zn(2+)-binding residues include histidine 445, histidine 447, cysteine 453, histidine 457, cysteine 465, and cysteine 467.

Belongs to the arenaviridae GPC protein family. In terms of assembly, homotetramer; disulfide-linked. Homotetramer. GP2 homotetramers bind through ionic interactions with GP1 homotetramers to form the GP complex together with the stable signal peptide. The GP-C polyprotein interacts with the host protease MBTPS1/SKI-1 resulting in the polyprotein processing. Post-translationally, specific enzymatic cleavages in vivo yield mature proteins. GP-C polyprotein is cleaved in the endoplasmic reticulum by the host protease MBTPS1. Only cleaved glycoprotein is incorporated into virions. In terms of processing, the SSP remains stably associated with the GP complex following cleavage by signal peptidase and plays crucial roles in the trafficking of GP through the secretory pathway. Myristoylation is necessary for GP2-mediated fusion activity.

It localises to the virion membrane. It is found in the host endoplasmic reticulum membrane. The protein localises to the host Golgi apparatus membrane. Its subcellular location is the host cell membrane. In terms of biological role, class I viral fusion protein that directs fusion of viral and host endosomal membranes, leading to delivery of the nucleocapsid into the cytoplasm. Membrane fusion is mediated by irreversible conformational changes induced upon acidification in the endosome. Its function is as follows. Stable signal peptide (SSP): cleaved and functions as a signal peptide. In addition, it is also retained as the third component of the GP complex. The SSP is required for efficient glycoprotein expression, post-translational maturation cleavage of GP1 and GP2, glycoprotein transport to the cell surface plasma membrane, formation of infectious virus particles, and acid pH-dependent glycoprotein-mediated cell fusion. Functionally, interacts with the host receptor. The chain is Pre-glycoprotein polyprotein GP complex from Peromyscus californicus (California mouse).